Reading from the N-terminus, the 346-residue chain is Protein RecA (346 aa).

Position 65–72 (65–72 (GPESSGKT)) interacts with ATP.

It belongs to the RecA family.

The protein localises to the cytoplasm. Its function is as follows. Can catalyze the hydrolysis of ATP in the presence of single-stranded DNA, the ATP-dependent uptake of single-stranded DNA by duplex DNA, and the ATP-dependent hybridization of homologous single-stranded DNAs. It interacts with LexA causing its activation and leading to its autocatalytic cleavage. The protein is Protein RecA of Enterococcus mundtii.